The sequence spans 307 residues: N-acetylglucosaminyl-diphospho-decaprenol L-rhamnosyltransferase (307 aa).

The protein belongs to the glycosyltransferase 2 family. Mn(2+) is required as a cofactor. It depends on Mg(2+) as a cofactor.

The enzyme catalyses N-acetyl-alpha-D-glucosaminyl-1-diphospho-trans,octa-cis-decaprenol + dTDP-beta-L-rhamnose = alpha-L-rhamnosyl-(1-&gt;3)-N-acetyl-alpha-D-glucosaminyl-diphospho-trans,octa-cis-decaprenol + dTDP + H(+). Involved in the biosynthesis of the mycolylarabinogalactan-peptidoglycan (mAGP) complex, an essential component of the mycobacterial cell wall. Catalyzes the transfer of the rhamnosyl moiety from dTDP-rhamnosyl (dTDP-Rha) onto the decaprenyl-pyrophosphoryl-GlcNAc (C50-PP-GlcNAc), yielding rhamnosyl-decaprenyl-pyrophosphoryl-GlcNAc (Rha-C50-PP-GlcNAc). The polypeptide is N-acetylglucosaminyl-diphospho-decaprenol L-rhamnosyltransferase (wbbL) (Mycobacterium tuberculosis (strain CDC 1551 / Oshkosh)).